A 346-amino-acid polypeptide reads, in one-letter code: Integrin beta-1-binding protein 2 (346 aa).

Residues Cys-5, Cys-10, Cys-24, and His-27 each contribute to the Zn(2+) site. The CHORD 1 domain maps to 5 to 64 (CHNKGCGQHFDPQTNLPDSCCHHPGVPVFHDALKGWSCCRKRTVDFSEFLNIKGCTVGPH). The SH3-binding motif lies at 28-31 (PGVP). Zn(2+) contacts are provided by Cys-42, Cys-43, Cys-59, and His-64. The short motif at 70-78 (PEAPQPEGP) is the SH3-binding element. The disordered stretch occupies residues 70–113 (PEAPQPEGPATSSSLLEQKPPNTIPKSAETLRRERPKSDLPPKL). Over residues 79–94 (ATSSSLLEQKPPNTIP) the composition is skewed to polar residues. A compositionally biased stretch (basic and acidic residues) spans 98 to 109 (ETLRRERPKSDL). Positions 150 and 155 each coordinate Zn(2+). One can recognise a CHORD 2 domain in the interval 150–209 (CQNPGCDAVYQGSESDATPCTYHPGAPRFHEGMKSWSCCGIQTLDFGVFLAQPGCRVGRH). The short motif at 159 to 162 (YQGS) is the SH2-binding element. Zn(2+) is bound by residues Cys-169 and His-172. The short motif at 173–176 (PGAP) is the SH3-binding element. Residues Cys-187, Cys-188, Cys-204, and His-209 each coordinate Zn(2+). Residues 216 to 305 (LASCRHDWHQ…ADPGFWAQLE (90 aa)) enclose the CS domain. The SH2-binding motif lies at 235-238 (YGQI). The interval 311 to 346 (AEKSKSGVGLEMDEEESEDSDDDLSWTEEEEEAMGE) is disordered. Acidic residues predominate over residues 321 to 346 (EMDEEESEDSDDDLSWTEEEEEAMGE).

Interacts with beta-1 integrin subunit. This interaction is regulated by divalent cations, and it occurs only in absence of calcium.

In terms of biological role, may play a role during maturation and/or organization of muscles cells. This is Integrin beta-1-binding protein 2 (ITGB1BP2) from Sus scrofa (Pig).